The following is a 478-amino-acid chain: Cysteine--tRNA ligase (478 aa).

C29 lines the Zn(2+) pocket. A 'HIGH' region motif is present at residues 31–41; sequence PTVYDIPHIGN. The Zn(2+) site is built by C216, H241, and E245. The 'KMSKS' region motif lies at 274 to 278; the sequence is KMSKS. K277 lines the ATP pocket.

Belongs to the class-I aminoacyl-tRNA synthetase family. In terms of assembly, monomer. Zn(2+) serves as cofactor.

It is found in the cytoplasm. The enzyme catalyses tRNA(Cys) + L-cysteine + ATP = L-cysteinyl-tRNA(Cys) + AMP + diphosphate. This chain is Cysteine--tRNA ligase, found in Orientia tsutsugamushi (strain Ikeda) (Rickettsia tsutsugamushi).